Consider the following 255-residue polypeptide: uncharacterized protein (255 aa).

2 N-linked (GlcNAc...) asparagine; by host glycosylation sites follow: Asn16 and Asn58. Transmembrane regions (helical) follow at residues 72-92 (LIYS…TIYY) and 104-124 (LWYI…SHIC).

It is found in the membrane. This is an uncharacterized protein from Acanthamoeba polyphaga (Amoeba).